We begin with the raw amino-acid sequence, 302 residues long: Sulfate adenylyltransferase subunit 2 (302 aa).

This sequence belongs to the PAPS reductase family. CysD subfamily. In terms of assembly, heterodimer composed of CysD, the smaller subunit, and CysN.

It catalyses the reaction sulfate + ATP + H(+) = adenosine 5'-phosphosulfate + diphosphate. Its pathway is sulfur metabolism; hydrogen sulfide biosynthesis; sulfite from sulfate: step 1/3. With CysN forms the ATP sulfurylase (ATPS) that catalyzes the adenylation of sulfate producing adenosine 5'-phosphosulfate (APS) and diphosphate, the first enzymatic step in sulfur assimilation pathway. APS synthesis involves the formation of a high-energy phosphoric-sulfuric acid anhydride bond driven by GTP hydrolysis by CysN coupled to ATP hydrolysis by CysD. The chain is Sulfate adenylyltransferase subunit 2 from Salmonella agona (strain SL483).